The primary structure comprises 75 residues: UPF0352 protein YPTB1297 (75 aa).

The protein belongs to the UPF0352 family.

This chain is UPF0352 protein YPTB1297, found in Yersinia pseudotuberculosis serotype I (strain IP32953).